Consider the following 207-residue polypeptide: Putative 3-methyladenine DNA glycosylase (207 aa).

This sequence belongs to the DNA glycosylase MPG family.

The sequence is that of Putative 3-methyladenine DNA glycosylase from Burkholderia lata (strain ATCC 17760 / DSM 23089 / LMG 22485 / NCIMB 9086 / R18194 / 383).